We begin with the raw amino-acid sequence, 377 residues long: WAT1-related protein At5g13670 (377 aa).

Helical transmembrane passes span 9–29 (FIAI…AKLA), 38–58 (VLVA…ALIL), 64–84 (PKLT…EPVV), 99–119 (TFTS…ACVF), 136–156 (VGTM…GNVI), 187–207 (IMLV…AKIL), 214–234 (LSLT…MGLI), 251–271 (LLAS…IGWA), 279–299 (FVSA…TFVF), and 303–323 (VYVG…LVLW). EamA domains are found at residues 18–149 (LYAL…MLMT) and 194–322 (FSWS…YLVL).

The protein belongs to the drug/metabolite transporter (DMT) superfamily. Plant drug/metabolite exporter (P-DME) (TC 2.A.7.4) family.

The protein localises to the membrane. This chain is WAT1-related protein At5g13670, found in Arabidopsis thaliana (Mouse-ear cress).